Here is a 414-residue protein sequence, read N- to C-terminus: Thyroid hormone receptor beta-B (414 aa).

Residues 1-59 (MPSSMSVRLFTASAAQRKKIQEGDCCVVLAGKTQGRFILIGAVARVSGYIPSYLDKDEL) form a modulating region. 2 NR C4-type zinc fingers span residues 60–80 (CVVC…CEGC) and 98–122 (CKYE…FKKC). Positions 60-134 (CVVCGDKATG…VGMATDLVLD (75 aa)) form a DNA-binding region, nuclear receptor. The 245-residue stretch at 170-414 (EEWELIQVVT…PPLFLEVFED (245 aa)) folds into the NR LBD domain.

Belongs to the nuclear hormone receptor family. NR1 subfamily.

Its subcellular location is the nucleus. Its function is as follows. High affinity receptor for triiodothyronine (T3). The polypeptide is Thyroid hormone receptor beta-B (thrb-b) (Xenopus laevis (African clawed frog)).